A 116-amino-acid chain; its full sequence is Ribosome-binding factor A (116 aa).

The protein belongs to the RbfA family. As to quaternary structure, monomer. Binds 30S ribosomal subunits, but not 50S ribosomal subunits or 70S ribosomes.

Its subcellular location is the cytoplasm. Functionally, one of several proteins that assist in the late maturation steps of the functional core of the 30S ribosomal subunit. Associates with free 30S ribosomal subunits (but not with 30S subunits that are part of 70S ribosomes or polysomes). Required for efficient processing of 16S rRNA. May interact with the 5'-terminal helix region of 16S rRNA. This chain is Ribosome-binding factor A, found in Streptococcus pneumoniae serotype 4 (strain ATCC BAA-334 / TIGR4).